The following is a 317-amino-acid chain: Taste receptor type 2 member 7 (317 aa).

Residues methionine 1–leucine 9 lie on the Extracellular side of the membrane. Residues leucine 10–valine 30 form a helical membrane-spanning segment. Residues asparagine 31–arginine 55 lie on the Cytoplasmic side of the membrane. Residues isoleucine 56–tyrosine 76 traverse the membrane as a helical segment. The Extracellular portion of the chain corresponds to alanine 77–histidine 94. Residues leucine 95 to phenylalanine 115 form a helical membrane-spanning segment. Topologically, residues histidine 116–arginine 128 are cytoplasmic. Residues valine 129 to threonine 149 form a helical membrane-spanning segment. Topologically, residues glutamate 150–asparagine 187 are extracellular. Asparagine 167 carries N-linked (GlcNAc...) asparagine glycosylation. Residues leucine 188–leucine 208 traverse the membrane as a helical segment. Over tryptophan 209–lysine 235 the chain is Cytoplasmic. The helical transmembrane segment at alanine 236–serine 256 threads the bilayer. The Extracellular portion of the chain corresponds to serine 257–alanine 266. Residues valine 267–leucine 287 traverse the membrane as a helical segment. Over glycine 288 to isoleucine 317 the chain is Cytoplasmic.

The protein belongs to the G-protein coupled receptor T2R family.

The protein resides in the membrane. Gustducin-coupled receptor implicated in the perception of bitter compounds in the oral cavity and the gastrointestinal tract. Signals through PLCB2 and the calcium-regulated cation channel TRPM5. The sequence is that of Taste receptor type 2 member 7 (TAS2R7) from Papio hamadryas (Hamadryas baboon).